The chain runs to 114 residues: 11.9 kDa wall protein (114 aa).

A propeptide spanning residues 1–6 (MSFKTR) is cleaved from the precursor.

Its subcellular location is the secreted. The protein resides in the cell wall. May play a role in the structure of the hypha-forming fruit bodies. This chain is 11.9 kDa wall protein (TDF-1), found in Tuber dryophilum (Truffle).